The sequence spans 202 residues: NADH-quinone oxidoreductase subunit C (202 aa).

It belongs to the complex I 30 kDa subunit family. As to quaternary structure, NDH-1 is composed of 14 different subunits. Subunits NuoB, C, D, E, F, and G constitute the peripheral sector of the complex.

The protein resides in the cell inner membrane. The enzyme catalyses a quinone + NADH + 5 H(+)(in) = a quinol + NAD(+) + 4 H(+)(out). In terms of biological role, NDH-1 shuttles electrons from NADH, via FMN and iron-sulfur (Fe-S) centers, to quinones in the respiratory chain. The immediate electron acceptor for the enzyme in this species is believed to be ubiquinone. Couples the redox reaction to proton translocation (for every two electrons transferred, four hydrogen ions are translocated across the cytoplasmic membrane), and thus conserves the redox energy in a proton gradient. This Brucella abortus (strain 2308) protein is NADH-quinone oxidoreductase subunit C.